Reading from the N-terminus, the 175-residue chain is Pre-mRNA-splicing factor SNT309 (175 aa).

As to quaternary structure, belongs to the NTC complex (or PRP19-associated complex), composed of at least CEF1, CLF1, ISY1, NTC20, SNT309, SYF1, SYF2, and PRP19. The NTC complex associates with the spliceosome after the release of the U1 and U4 snRNAs and forms the CWC spliceosome subcomplex (or CEF1-associated complex) reminiscent of a late-stage spliceosome composed also of the U2, U5 and U6 snRNAs and at least BUD13, BUD31, BRR2, CDC40, CUS1, CWC2, CWC15, CWC21, CWC22, CWC23, CWC24, CWC25, CWC27, ECM2, HSH155, IST3, LEA1, MSL1, PRP8, PRP9, PRP11, PRP21, PRP22, PRP45, PRP46, SLU7, SMB1, SMD1, SMD2, SMD3, SMX2, SMX3, SNU114, SPP2, RSE1 and YJU2. Interacts with PRP19.

It is found in the nucleus. In terms of biological role, involved in pre-mRNA splicing by stabilizing the NTC (or PRP19-associated complex). As a component of the NTC complex, associates to the spliceosome to mediate conformational rearrangement or to stabilize the structure of the spliceosome after U4 snRNA dissociation, which leads to spliceosome maturation. This is Pre-mRNA-splicing factor SNT309 (SNT309) from Saccharomyces cerevisiae (strain ATCC 204508 / S288c) (Baker's yeast).